The chain runs to 343 residues: Probable dual-specificity RNA methyltransferase RlmN (343 aa).

Catalysis depends on Glu93, which acts as the Proton acceptor. In terms of domain architecture, Radical SAM core spans 99–320 (TDDRATLCVS…NAKGVVCTIR (222 aa)). A disulfide bond links Cys106 and Cys331. 3 residues coordinate [4Fe-4S] cluster: Cys113, Cys117, and Cys120. S-adenosyl-L-methionine-binding positions include 158–159 (GE), Ser190, 212–214 (SLH), and His288. Cys331 (S-methylcysteine intermediate) is an active-site residue.

The protein belongs to the radical SAM superfamily. RlmN family. The cofactor is [4Fe-4S] cluster.

It localises to the cytoplasm. The catalysed reaction is adenosine(2503) in 23S rRNA + 2 reduced [2Fe-2S]-[ferredoxin] + 2 S-adenosyl-L-methionine = 2-methyladenosine(2503) in 23S rRNA + 5'-deoxyadenosine + L-methionine + 2 oxidized [2Fe-2S]-[ferredoxin] + S-adenosyl-L-homocysteine. It carries out the reaction adenosine(37) in tRNA + 2 reduced [2Fe-2S]-[ferredoxin] + 2 S-adenosyl-L-methionine = 2-methyladenosine(37) in tRNA + 5'-deoxyadenosine + L-methionine + 2 oxidized [2Fe-2S]-[ferredoxin] + S-adenosyl-L-homocysteine. Specifically methylates position 2 of adenine 2503 in 23S rRNA and position 2 of adenine 37 in tRNAs. This Parabacteroides distasonis (strain ATCC 8503 / DSM 20701 / CIP 104284 / JCM 5825 / NCTC 11152) protein is Probable dual-specificity RNA methyltransferase RlmN.